Here is a 507-residue protein sequence, read N- to C-terminus: ATP synthase subunit alpha, chloroplastic (507 aa).

170–177 (GDRQTGKT) is an ATP binding site. Threonine 257 bears the Phosphothreonine mark.

The protein belongs to the ATPase alpha/beta chains family. In terms of assembly, F-type ATPases have 2 components, CF(1) - the catalytic core - and CF(0) - the membrane proton channel. CF(1) has five subunits: alpha(3), beta(3), gamma(1), delta(1), epsilon(1). CF(0) has four main subunits: a, b, b' and c.

It is found in the plastid. The protein resides in the chloroplast thylakoid membrane. The catalysed reaction is ATP + H2O + 4 H(+)(in) = ADP + phosphate + 5 H(+)(out). Functionally, produces ATP from ADP in the presence of a proton gradient across the membrane. The alpha chain is a regulatory subunit. The chain is ATP synthase subunit alpha, chloroplastic from Lepidium virginicum (Virginia pepperweed).